The sequence spans 228 residues: 2,3-bisphosphoglycerate-dependent phosphoglycerate mutase (228 aa).

Substrate-binding positions include 8-15 (RHGQSEWN), 21-22 (TG), Arg-60, 87-90 (ERHY), Lys-98, 114-115 (RR), and 183-184 (GN). The active-site Tele-phosphohistidine intermediate is His-9. The active-site Proton donor/acceptor is the Glu-87.

It belongs to the phosphoglycerate mutase family. BPG-dependent PGAM subfamily.

The catalysed reaction is (2R)-2-phosphoglycerate = (2R)-3-phosphoglycerate. Its pathway is carbohydrate degradation; glycolysis; pyruvate from D-glyceraldehyde 3-phosphate: step 3/5. Its function is as follows. Catalyzes the interconversion of 2-phosphoglycerate and 3-phosphoglycerate. This is 2,3-bisphosphoglycerate-dependent phosphoglycerate mutase from Staphylococcus haemolyticus (strain JCSC1435).